A 2094-amino-acid chain; its full sequence is Protein Ycf2 (2094 aa).

1385 to 1392 (GPPETGRS) is an ATP binding site.

Belongs to the Ycf2 family.

Its subcellular location is the plastid. The protein localises to the chloroplast stroma. Functionally, probable ATPase of unknown function. Its presence in a non-photosynthetic plant (Epifagus virginiana) and experiments in tobacco indicate that it has an essential function which is probably not related to photosynthesis. The protein is Protein Ycf2 of Huperzia lucidula (Shining clubmoss).